A 109-amino-acid polypeptide reads, in one-letter code: Small ribosomal subunit protein uS17 (109 aa).

It belongs to the universal ribosomal protein uS17 family. As to quaternary structure, part of the 30S ribosomal subunit.

One of the primary rRNA binding proteins, it binds specifically to the 5'-end of 16S ribosomal RNA. This Methanococcus maripaludis (strain DSM 14266 / JCM 13030 / NBRC 101832 / S2 / LL) protein is Small ribosomal subunit protein uS17.